We begin with the raw amino-acid sequence, 960 residues long: Serine/threonine-protein kinase atg1 (960 aa).

Residues 22 to 327 form the Protein kinase domain; sequence YTRLDEIGRG…FPEFFSNNVI (306 aa). Residues 28–36 and Lys51 contribute to the ATP site; that span reads IGRGSFATV. Asp165 acts as the Proton acceptor in catalysis. Disordered stretches follow at residues 333–467, 503–538, 550–571, 673–694, 789–815, and 926–960; these read GLLA…RAQE, PRLQ…PHAN, ARAD…QSPT, SAST…SADS, RLPP…TADV, and AKRS…TPPR. Polar residues-rich tracts occupy residues 376–388 and 520–536; these read PVTT…TPPT and RRTT…SSPH. A compositionally biased stretch (basic and acidic residues) spans 550-566; it reads ARADSTHQRQHSYERRY. Over residues 789 to 800 the composition is skewed to basic and acidic residues; the sequence is RLPPDHPSHPDN. The span at 801-815 shows a compositional bias: low complexity; sequence HSISSTAGSSSTADV. Residues 930-951 show a composition bias toward polar residues; it reads SAPTPTAGSAGKTPTSNISPVT.

It belongs to the protein kinase superfamily. Ser/Thr protein kinase family. APG1/unc-51/ULK1 subfamily. In terms of assembly, homodimer. Forms a ternary complex with ATG13 and ATG17.

It localises to the cytoplasm. Its subcellular location is the preautophagosomal structure membrane. The enzyme catalyses L-seryl-[protein] + ATP = O-phospho-L-seryl-[protein] + ADP + H(+). It catalyses the reaction L-threonyl-[protein] + ATP = O-phospho-L-threonyl-[protein] + ADP + H(+). Serine/threonine protein kinase involved in the cytoplasm to vacuole transport (Cvt) and found to be essential in autophagy, where it is required for the formation of autophagosomes. Involved in the clearance of protein aggregates which cannot be efficiently cleared by the proteasome. Required for selective autophagic degradation of the nucleus (nucleophagy) as well as for mitophagy which contributes to regulate mitochondrial quantity and quality by eliminating the mitochondria to a basal level to fulfill cellular energy requirements and preventing excess ROS production. Also involved in endoplasmic reticulum-specific autophagic process, in selective removal of ER-associated degradation (ERAD) substrates. Plays a key role in ATG9 and ATG23 cycling through the pre-autophagosomal structure and is necessary to promote ATG18 binding to ATG9 through phosphorylation of ATG9. Catalyzes phosphorylation of ATG4, decreasing the interaction between ATG4 and ATG8 and impairing deconjugation of PE-conjugated forms of ATG8. The protein is Serine/threonine-protein kinase atg1 of Penicillium rubens (strain ATCC 28089 / DSM 1075 / NRRL 1951 / Wisconsin 54-1255) (Penicillium chrysogenum).